A 1588-amino-acid polypeptide reads, in one-letter code: Paternally-expressed gene 3 protein (1588 aa).

One can recognise an SCAN box domain in the interval 46 to 128 (HQRFRNLIYV…TLLENYKEMY (83 aa)). Disordered stretches follow at residues 128–230 (YQPE…ESYQ), 266–306 (DGHS…RRGI), and 319–349 (KFIK…MSDD). Residues 129–142 (QPEDDNNSDVTSDD) show a composition bias toward acidic residues. Basic and acidic residues-rich tracts occupy residues 143–152 (DMTRNRRESS), 161–182 (SGDR…DRWS), 206–225 (FEMD…RSQD), and 295–306 (PEAKKSTHRRGI). 3 consecutive C2H2-type zinc fingers follow at residues 454–476 (YVCD…QIMH), 507–529 (FECK…RKIH), and 565–587 (YECR…QKIH). The span at 588-607 (FGDDKDNEREHERERERGET) shows a compositional bias: basic and acidic residues. The tract at residues 588-610 (FGDDKDNEREHERERERGETFRP) is disordered. The C2H2-type 4 zinc finger occupies 627–649 (YECKVCGETFLHSSSLKEHQKIH). Positions 838–930 (LVASKPPRSH…EFSVPSSNVR (93 aa)) are disordered. Residues 868 to 881 (LNDKRQKIPARENP) show a composition bias toward basic and acidic residues. Residues 969–991 (YECQECGECFAHSSDLTEHQKIH) form a C2H2-type 5 zinc finger. The interval 1056–1104 (EKSHGEESQGENTDGEETHSEETHGQETIEDPVIQGSDMEDPQKDDPDD) is disordered. The segment covering 1071 to 1082 (EETHSEETHGQE) has biased composition (basic and acidic residues). 5 C2H2-type zinc fingers span residues 1107-1129 (YECE…QKVH), 1163-1185 (YECP…QRIH), 1225-1247 (IRCL…MRLH), 1282-1304 (FECA…VTVH), and 1332-1354 (YECK…KELH). The segment covering 1395-1415 (AEPEVEAAEPEVEAAEPEVEA) has biased composition (acidic residues). The tract at residues 1395–1495 (AEPEVEAAEP…GIEDPEEGED (101 aa)) is disordered. Repeat copies occupy residues 1397–1403 (PEVEAAE), 1404–1410 (PEVEAAE), 1411–1417 (PEVEAAE), 1418–1422 (PNGEA), 1425–1429 (PDGEA), 1432–1436 (PIGEA), and 1439–1443 (PNGEA). A 3 X 7 AA repeat of P-E-V-E-A-A-E region spans residues 1397–1417 (PEVEAAEPEVEAAEPEVEAAE). The segment at 1418 to 1443 (PNGEAEGPDGEAAEPIGEAGQPNGEA) is 4 X 5 AA repeat of P-X-G-E-A. Composition is skewed to acidic residues over residues 1449–1466 (DADE…ERAE) and 1475–1495 (PEGD…EGED). 2 C2H2-type zinc fingers span residues 1505-1527 (YDCH…LKTH) and 1564-1586 (FKCD…QNTH).

The protein belongs to the krueppel C2H2-type zinc-finger protein family. In terms of assembly, homodimer. Interacts with SIAH1A and SIAH2. Interacts with TRAF2.

It is found in the nucleus. It localises to the cytoplasm. In terms of biological role, induces apoptosis in cooperation with SIAH1A. Acts as a mediator between p53/TP53 and BAX in a neuronal death pathway that is activated by DNA damage. Acts synergistically with TRAF2 and inhibits TNF induced apoptosis through activation of NF-kappa-B. The protein is Paternally-expressed gene 3 protein (PEG3) of Pan troglodytes (Chimpanzee).